A 369-amino-acid chain; its full sequence is Glutamate 5-kinase (369 aa).

Residue K10 coordinates ATP. Residues S50, D137, and N149 each contribute to the substrate site. ATP contacts are provided by residues 169–170 (TD) and 210–216 (TGGMVTK). The PUA domain maps to 276-349 (EGSIFIDEGA…GKHSEEMLAT (74 aa)).

The protein belongs to the glutamate 5-kinase family.

Its subcellular location is the cytoplasm. The enzyme catalyses L-glutamate + ATP = L-glutamyl 5-phosphate + ADP. It participates in amino-acid biosynthesis; L-proline biosynthesis; L-glutamate 5-semialdehyde from L-glutamate: step 1/2. Catalyzes the transfer of a phosphate group to glutamate to form L-glutamate 5-phosphate. The polypeptide is Glutamate 5-kinase (Desulfitobacterium hafniense (strain Y51)).